Here is a 542-residue protein sequence, read N- to C-terminus: MITRSRCRRSLLWFLVFHGGATATGAPSGGKELSQTPTWAVAVVCTFLILISHLLEKGLQRLANWLWKKHKNSLLEALEKIKAELMILGFISLLLTFGEPYILKICVPRKAALSMLPCLSEDTVLFQKLAPSSLSRHLLAAGDTSINCKQGSEPLITLKGLHQLHILLFFLAIFHIVYSLITMMLSRLKIRGWKKWEQETLSNDYEFSIDHSRLRLTHETSFVREHTSFWTTTPFFFYVGCFFRQFFVSVERTDYLTLRHGFISAHLAPGRKFNFQRYIKRSLEDDFKLVVGISPVLWASFVIFLLFNVNGWRTLFWASIPPLLIILAVGTKLQAIMATMALEIVETHAVVQGMPLVQGSDRYFWFDCPQLLLHLIHFALFQNAFQITHFFWIWYSFGLKSCFHKDFNLVVSKLFLCLGALILCSYITLPLYALVTQMGSHMKKAVFDEQMAKALKKWHKDIKLKKGKARKLPSKTLGVSESFSLSSSSSATTLHRSKTTGHSSNIIYYKQEDEEDEMSDLEAGAEDAIDRIQQQEMQFHNS.

The Extracellular portion of the chain corresponds to 1-38; that stretch reads MITRSRCRRSLLWFLVFHGGATATGAPSGGKELSQTPT. The helical transmembrane segment at 39–59 threads the bilayer; it reads WAVAVVCTFLILISHLLEKGL. Over 60–82 the chain is Cytoplasmic; that stretch reads QRLANWLWKKHKNSLLEALEKIK. Residues 83-103 form a helical membrane-spanning segment; sequence AELMILGFISLLLTFGEPYIL. At 104-165 the chain is on the extracellular side; that stretch reads KICVPRKAAL…ITLKGLHQLH (62 aa). The chain crosses the membrane as a helical span at residues 166–186; the sequence is ILLFFLAIFHIVYSLITMMLS. Residues 187–288 are Cytoplasmic-facing; sequence RLKIRGWKKW…IKRSLEDDFK (102 aa). A helical membrane pass occupies residues 289 to 309; the sequence is LVVGISPVLWASFVIFLLFNV. Residues 310–315 lie on the Extracellular side of the membrane; that stretch reads NGWRTL. Residues 316–336 form a helical membrane-spanning segment; it reads FWASIPPLLIILAVGTKLQAI. Residues 337-374 are Cytoplasmic-facing; it reads MATMALEIVETHAVVQGMPLVQGSDRYFWFDCPQLLLH. A helical transmembrane segment spans residues 375 to 395; it reads LIHFALFQNAFQITHFFWIWY. At 396-414 the chain is on the extracellular side; it reads SFGLKSCFHKDFNLVVSKL. Residues 415–435 traverse the membrane as a helical segment; that stretch reads FLCLGALILCSYITLPLYALV. Residues 436–542 lie on the Cytoplasmic side of the membrane; the sequence is TQMGSHMKKA…QQQEMQFHNS (107 aa). Residues 449-470 are calmodulin-binding; that stretch reads EQMAKALKKWHKDIKLKKGKAR.

This sequence belongs to the MLO family. Restricted to pollen, synergids, pistils and immature anthers. Also detected in seedlings, leaves, stems and inflorescens.

It localises to the cell membrane. The protein resides in the endomembrane system. Its function is as follows. May be involved in modulation of pathogen defense and leaf cell death. Activity seems to be regulated by Ca(2+)-dependent calmodulin binding and seems not to require heterotrimeric G proteins. Controls pollen tube reception in the female gametophyte synergids. The polypeptide is MLO-like protein 7 (MLO7) (Arabidopsis thaliana (Mouse-ear cress)).